We begin with the raw amino-acid sequence, 673 residues long: MDKIKAKIDELKQKLDQWNYEYYVLDDPSVPDHVYDQTMRELIELENNYPQFKTNNSPSVKVGGFVSEKFNKVKHKRPMLSLSNAFNDDDLKKFDQDNQNASVDLKGYVVEPKIDGLSISIIYKNAKLHQAITRGDGINGEDVTSNILTIKDIPHYIDQKYKDYEIEVRGEVYMAFHDFYEMNDNLEESDKKFANPRNAAAGTLRSLDNSIVAERKLSAFMYYLVNAQELGIKTHYESIQFLRDNKFKVSDLIVKVDTINEVINQIDCYTKVRDKLSYMIDGIVIKINNLEVYDEIGYTSKFPKWAIAYKFPANVVSSQLLEIINDVGRTGKISYVAKIKPILLDGSMVEYATLHNFDFIKEKDIRINDEIKIYKAGDVIPYVDGVDLSKRLANSVPYEPIINCPSCQSVLVRENDEVDQRCLNIYGCKKINIEKIVYFVSRNCMNIEGMSDAIINKFYDANLIKNIADLYYLQKHKEFILTSDFKIKEKSFSNLINSINNSKKCSLEFLLTAFGIRHVGPNLAKKIAKQFKTMTALMHANFDELTNVDACGEKAALSLINWFNDEHNVSLVNQLQQVGVNMEYIDDFIYDDNINIIDEYKNKTFVITGSFSISRDEIKTILEKYYHAKVKNSVSKKTDYVLVGTEAGTKLEKAKLLGVKIIENEFWKKDNNF.

Residues 32–36, 81–82, and glutamate 111 each bind NAD(+); these read DHVYD and SL. Lysine 113 functions as the N6-AMP-lysine intermediate in the catalytic mechanism. Arginine 134, glutamate 171, lysine 286, and lysine 310 together coordinate NAD(+). Zn(2+) contacts are provided by cysteine 404, cysteine 407, cysteine 422, and cysteine 428. One can recognise a BRCT domain in the interval 595-673; sequence NIIDEYKNKT…NEFWKKDNNF (79 aa).

The protein belongs to the NAD-dependent DNA ligase family. LigA subfamily. Requires Mg(2+) as cofactor. It depends on Mn(2+) as a cofactor.

It catalyses the reaction NAD(+) + (deoxyribonucleotide)n-3'-hydroxyl + 5'-phospho-(deoxyribonucleotide)m = (deoxyribonucleotide)n+m + AMP + beta-nicotinamide D-nucleotide.. Functionally, DNA ligase that catalyzes the formation of phosphodiester linkages between 5'-phosphoryl and 3'-hydroxyl groups in double-stranded DNA using NAD as a coenzyme and as the energy source for the reaction. It is essential for DNA replication and repair of damaged DNA. The chain is DNA ligase from Ureaplasma parvum serovar 3 (strain ATCC 27815 / 27 / NCTC 11736).